Here is a 238-residue protein sequence, read N- to C-terminus: Fatty acid metabolism regulator protein (238 aa).

The HTH gntR-type domain maps to 6-74; it reads KGPASFAEKY…HGKPTRVNNF (69 aa). Positions 34-53 form a DNA-binding region, H-T-H motif; it reads ERELSELIGVTRTTLREVLQ.

In terms of assembly, homodimer.

It is found in the cytoplasm. Its function is as follows. Multifunctional regulator of fatty acid metabolism. The protein is Fatty acid metabolism regulator protein of Shewanella baltica (strain OS155 / ATCC BAA-1091).